Reading from the N-terminus, the 221-residue chain is PKHD-type hydroxylase A9601_13531 (221 aa).

Positions 80–174 constitute a Fe2OG dioxygenase domain; the sequence is LIHGIMFTKS…RIVCVGWIES (95 aa). Positions 98, 100, and 155 each coordinate Fe cation. Arg165 provides a ligand contact to 2-oxoglutarate.

Requires Fe(2+) as cofactor. L-ascorbate serves as cofactor.

The polypeptide is PKHD-type hydroxylase A9601_13531 (Prochlorococcus marinus (strain AS9601)).